Reading from the N-terminus, the 115-residue chain is LSM complex subunit LSM7 (115 aa).

The span at 1-10 shows a compositional bias: basic and acidic residues; that stretch reads MHQQHSKSEN. Positions 1-23 are disordered; that stretch reads MHQQHSKSENKPQQQRKKFEGPK. In terms of domain architecture, Sm spans 25-108; sequence EAILDLAKYK…LVSLSSAEGS (84 aa).

It belongs to the snRNP Sm proteins family. In terms of assembly, component of the heptameric LSM1-LSM7 complex that forms a seven-membered ring structure with a donut shape. The LSm subunits are arranged in the order LSM1, LSM2, LSM3, LSM6, LSM5, LSM7 and LSM4. Except for LSM1, where a C-terminal helix crosses the ring structure to form additional interactions with LSM3 and LSM6, each subunit interacts only with its two neighboring subunits. The LSM1-LSM7 complex interacts with PAT1; within the complex PAT1 has direct interactions with LSM2 and LSM3. The LSM1-LSM7 complex interacts with XRN1. Component of the heptameric LSM2-LSM8 complex that forms a seven-membered ring structure with a donut shape; an RNA strand can pass through the hole in the center of the ring structure. The LSm subunits are arranged in the order LSM8, LSM2, LSM3, LSM6, LSM5, LSM7 and LSM4. Component of the spliceosome U4/U6-U5 tri-snRNP complex composed of the U4, U6 and U5 snRNAs and at least PRP3, PRP4, PRP6, PRP8, PRP18, PRP31, PRP38, SNU13, SNU23, SNU66, SNU114, SPP381, SMB1, SMD1, SMD2, SMD3, SMX2, SMX3, LSM2, LSM3, LSM4, LSM5, LSM6, LSM7, LSM8, BRR2 and DIB1. May be found in a complex comprising LSM2-LSM7 without LSM1 or LSM8; the complex associates with pre-P RNA and snoRNA SNR5.

The protein localises to the nucleus. Its subcellular location is the nucleolus. The protein resides in the cytoplasm. In terms of biological role, component of LSm protein complexes, which are involved in RNA processing and may function in a chaperone-like manner. Component of the cytoplasmic LSM1-LSM7 complex which is involved in mRNA degradation by activating the decapping step. Together with PAT1, the LSM1-LSM7 complex binds to osmotic stress-activated mRNAs to attenuate the osmotic stress response, probably by limiting ribosome access to the mRNA and consequently translation. Component of the nuclear LSM2-LSM8 complex, which is involved in spliceosome assembly. The LSM2-LSM8 complex plays a role in the biogenesis of the spliceosomal U4/U6-U5 tri-snRNP complex by accelerating PRP24-mediated annealing of U4/U6 di-snRNA. The LSM2-LSM8 complex binds U6 snRNA terminating with a non-cyclic 3' phosphate group. LSM2-LSM8 is probably also involved in degradation of nuclear pre-mRNA by targeting them for decapping. LSM2-LSM8 could be involved in processing of pre-tRNAs, pre-rRNAs and U3 snoRNA, although involvement may be indirect. In a complex that probably contains LSM2-LSM7, but not LSM1 or LSM8, associates with the precursor of the RNA component of RNase P (pre-P RNA) and may be involved in maturing pre-P RNA; the complex also associates with snoRNA SNR5. In Saccharomyces cerevisiae (strain ATCC 204508 / S288c) (Baker's yeast), this protein is LSM complex subunit LSM7 (LSM7).